The primary structure comprises 353 residues: Rhodopsin (353 aa).

The Extracellular segment spans residues 1 to 36 (MNGTEGPYFYVPMVNTSGIVRSPYEYPQYYLVNPAA). N-linked (GlcNAc...) asparagine glycosylation is found at asparagine 2 and asparagine 15. A helical transmembrane segment spans residues 37–61 (YAALGAYMFLLILVGFPINFLTLYV). At 62 to 73 (TIEHKKLRTPLN) the chain is on the cytoplasmic side. The chain crosses the membrane as a helical span at residues 74 to 96 (YILLNLAVADLFMVFGGFTTTMY). Residues 97-110 (TSMHGYFVLGRLGC) lie on the Extracellular side of the membrane. A disulfide bond links cysteine 110 and cysteine 187. A helical transmembrane segment spans residues 111 to 133 (NIEGFFATLGGEIALWSLVVLAI). The 'Ionic lock' involved in activated form stabilization signature appears at 134–136 (ERW). At 134–152 (ERWVVVCKPISNFRFGENH) the chain is on the cytoplasmic side. A helical transmembrane segment spans residues 153–173 (AIMGLAFTWLMALACAAPPLV). At 174 to 202 (GWSRYIPEGMQCSCGIDYYTRAEGFNNES) the chain is on the extracellular side. N-linked (GlcNAc...) asparagine glycosylation occurs at asparagine 200. A helical transmembrane segment spans residues 203–224 (FVIYMFICHFSIPLLVVFFCYG). Topologically, residues 225–252 (RLLCAVKEAAAAQQESETTQRAEREVTR) are cytoplasmic. Residues 253 to 274 (MVIMMVIAFLVCWLPYASVAWW) form a helical membrane-spanning segment. The Extracellular segment spans residues 275-286 (IFTHQGSDFGPV). A helical transmembrane segment spans residues 287–308 (FMTIPAFFAKSSSIYNPMIYIC). Residue lysine 296 is modified to N6-(retinylidene)lysine. Residues 309-353 (LNKQFRHCMITTLCCGKNPFEEEEGASTASKTEASSVSSSSVSPA) are Cytoplasmic-facing. S-palmitoyl cysteine attachment occurs at residues cysteine 322 and cysteine 323. The disordered stretch occupies residues 331 to 353 (EEGASTASKTEASSVSSSSVSPA). Low complexity predominate over residues 334 to 353 (ASTASKTEASSVSSSSVSPA).

This sequence belongs to the G-protein coupled receptor 1 family. Opsin subfamily. Phosphorylated on some or all of the serine and threonine residues present in the C-terminal region. Post-translationally, contains one covalently linked retinal chromophore.

The protein localises to the membrane. Its subcellular location is the cell projection. It localises to the cilium. The protein resides in the photoreceptor outer segment. Its function is as follows. Photoreceptor required for image-forming vision at low light intensity. While most salt water fish species use retinal as chromophore, most freshwater fish use 3-dehydroretinal, or a mixture of retinal and 3-dehydroretinal. Light-induced isomerization of 11-cis to all-trans retinal triggers a conformational change that activates signaling via G-proteins. Subsequent receptor phosphorylation mediates displacement of the bound G-protein alpha subunit by arrestin and terminates signaling. The protein is Rhodopsin (rho) of Diplodus vulgaris (Common two-banded seabream).